The sequence spans 89 residues: Small ribosomal subunit protein uS15 (89 aa).

The protein belongs to the universal ribosomal protein uS15 family. As to quaternary structure, part of the 30S ribosomal subunit. Forms a bridge to the 50S subunit in the 70S ribosome, contacting the 23S rRNA.

Its function is as follows. One of the primary rRNA binding proteins, it binds directly to 16S rRNA where it helps nucleate assembly of the platform of the 30S subunit by binding and bridging several RNA helices of the 16S rRNA. In terms of biological role, forms an intersubunit bridge (bridge B4) with the 23S rRNA of the 50S subunit in the ribosome. This chain is Small ribosomal subunit protein uS15, found in Corynebacterium urealyticum (strain ATCC 43042 / DSM 7109).